Reading from the N-terminus, the 436-residue chain is Testican-3 (436 aa).

The first 22 residues, 1–22 (MLKVSALLCVCAAAWCSQTLAA), serve as a signal peptide directing secretion. Disulfide bonds link Cys-90/Cys-101, Cys-95/Cys-111, Cys-139/Cys-169, Cys-142/Cys-162, Cys-151/Cys-183, Cys-317/Cys-341, Cys-352/Cys-359, and Cys-361/Cys-380. The 53-residue stretch at 133–185 (GLPSSTCKPCPIAYASPVCGSDGHSYSSQCKLEYQACVLGKQISIKCEGRCPC) folds into the Kazal-like domain. Positions 314 to 380 (DPPCHTELSN…GSRINGVADC (67 aa)) constitute a Thyroglobulin type-1 domain. Ser-387 and Ser-392 each carry an O-linked (Xyl...) (glycosaminoglycan) serine glycan. Positions 393 to 436 (GDFREWTDDEGEEDDIMNDKDDIEDDDEDEGDDDDDGDVHDGYI) are disordered. Residues 399–430 (TDDEGEEDDIMNDKDDIEDDDEDEGDDDDDGD) are compositionally biased toward acidic residues.

Contains chondroitin sulfate and heparan sulfate O-linked oligosaccharides. Expressed in brain.

The protein localises to the secreted. The protein resides in the extracellular space. It is found in the extracellular matrix. May participate in diverse steps of neurogenesis. Inhibits the processing of pro-matrix metalloproteinase 2 (MMP-2) by MT1-MMP and MT3-MMP. May interfere with tumor invasion. The polypeptide is Testican-3 (Spock3) (Mus musculus (Mouse)).